Reading from the N-terminus, the 72-residue chain is Seed trypsin/chymotrypsin inhibitor IVB (72 aa).

7 disulfide bridges follow: Cys-8–Cys-61, Cys-9–Cys-24, Cys-12–Cys-57, Cys-14–Cys-22, Cys-31–Cys-38, Cys-35–Cys-50, and Cys-40–Cys-48.

It belongs to the Bowman-Birk serine protease inhibitor family. Seed.

Functionally, inhibitor of trypsin and of chymotrypsin. May function as a natural phytochemical defense against predators. The polypeptide is Seed trypsin/chymotrypsin inhibitor IVB (Pisum sativum (Garden pea)).